We begin with the raw amino-acid sequence, 172 residues long: dCTP deaminase (172 aa).

DCTP is bound by residues 97 to 102 (RSSFAR) and Asp113. The Proton donor/acceptor role is filled by Glu123. DCTP is bound by residues Tyr155 and Gln162.

It belongs to the dCTP deaminase family. Homotrimer.

The enzyme catalyses dCTP + H2O + H(+) = dUTP + NH4(+). Its pathway is pyrimidine metabolism; dUMP biosynthesis; dUMP from dCTP (dUTP route): step 1/2. Its function is as follows. Catalyzes the deamination of dCTP to dUTP. The chain is dCTP deaminase from Metallosphaera sedula (strain ATCC 51363 / DSM 5348 / JCM 9185 / NBRC 15509 / TH2).